The sequence spans 276 residues: NH(3)-dependent NAD(+) synthetase (276 aa).

Glycine 43–serine 50 contributes to the ATP binding site. Aspartate 49 provides a ligand contact to Mg(2+). Arginine 146 lines the deamido-NAD(+) pocket. ATP is bound at residue threonine 166. Residue glutamate 171 participates in Mg(2+) binding. Deamido-NAD(+) contacts are provided by lysine 179 and aspartate 186. ATP-binding residues include lysine 195 and threonine 217. Histidine 266–lysine 267 contacts deamido-NAD(+).

It belongs to the NAD synthetase family. In terms of assembly, homodimer.

The enzyme catalyses deamido-NAD(+) + NH4(+) + ATP = AMP + diphosphate + NAD(+) + H(+). It functions in the pathway cofactor biosynthesis; NAD(+) biosynthesis; NAD(+) from deamido-NAD(+) (ammonia route): step 1/1. Its function is as follows. Catalyzes the ATP-dependent amidation of deamido-NAD to form NAD. Uses ammonia as a nitrogen source. The chain is NH(3)-dependent NAD(+) synthetase from Shewanella pealeana (strain ATCC 700345 / ANG-SQ1).